The chain runs to 234 residues: Glutamine synthetase (234 aa).

A GS catalytic domain is found at Lys1–Leu234. Residues Gly126–Arg157 form a disordered region.

This sequence belongs to the glutamine synthetase family. As to quaternary structure, homooctamer.

The protein resides in the cytoplasm. The enzyme catalyses L-glutamate + NH4(+) + ATP = L-glutamine + ADP + phosphate + H(+). The protein is Glutamine synthetase of Dunaliella salina (Green alga).